The chain runs to 167 residues: MASPRTVTIVALSVALGLFFVFMGTIKLTPRLSKDAYSEMKRAYKSYVRALPLLKKMGINSILLRKSIGALEVACGIVMTLVPGRPKDVANFFLLLLVLAVLFFHQLVGDPLKRYAHALVFGILLTCRLLIARKPEDRSSEKKPLPGNAEEQPSLYEKAPQGKVKVS.

The Cytoplasmic portion of the chain corresponds to 1-5; sequence MASPR. Residues 6–26 form a helical membrane-spanning segment; sequence TVTIVALSVALGLFFVFMGTI. Topologically, residues 27–61 are lumenal; it reads KLTPRLSKDAYSEMKRAYKSYVRALPLLKKMGINS. Residues 43-54 form an interaction with NGFR region; it reads AYKSYVRALPLL. A helical transmembrane segment spans residues 62 to 82; the sequence is ILLRKSIGALEVACGIVMTLV. The Cytoplasmic portion of the chain corresponds to 83 to 88; it reads PGRPKD. Residues 89 to 109 traverse the membrane as a helical segment; it reads VANFFLLLLVLAVLFFHQLVG. Topologically, residues 110 to 114 are lumenal; sequence DPLKR. The helical transmembrane segment at 115-132 threads the bilayer; sequence YAHALVFGILLTCRLLIA. Topologically, residues 133 to 167 are cytoplasmic; the sequence is RKPEDRSSEKKPLPGNAEEQPSLYEKAPQGKVKVS. Residues 136–167 are disordered; it reads EDRSSEKKPLPGNAEEQPSLYEKAPQGKVKVS.

Belongs to the DoxX family. In terms of assembly, may interact with NGFR. Interacts with RPN1, RPN2 and CANX.

It localises to the peroxisome membrane. It is found in the cytoplasmic vesicle. Its subcellular location is the endoplasmic reticulum membrane. Molecular chaperone which mediates the proper assembly and functional expression of the nicotinic acetylcholine receptors (nAChRs) throughout the brain. Essential for the proper folding, assembly, function and surface trafficking of alpha-7 (CHRNA7), alpha-4-beta-2, alpha-3-beta-2 and alpha-3-beta-4 receptors. Stably associates with ribophorin-1 (RPN1) and ribophorin-2 (RPN2) (components of the oligosaccharyl transferase (OST) complex) and with calnexin (CANX), both of which are critical for NACHO-mediated effects on CHRNA7 assembly and function. Facilitates the proper folding and assembly of alpha-6-beta-2 and alpha-6-beta-2-beta-3 receptors and acts at early stages of the nAChRs subunit assembly. Promotes the expression of the alpha-4(2):beta-2(3) stoichiometric form over the alpha-4(3):beta-2(2) form. The polypeptide is Novel acetylcholine receptor chaperone (TMEM35A) (Macaca fascicularis (Crab-eating macaque)).